The chain runs to 388 residues: Putative F-box protein At3g17490 (388 aa).

An F-box domain is found at 1 to 46 (MMMPHLSEDLVEEILSRVPAISLKRLRYTCKQWNALFNDQRFSKKH).

The sequence is that of Putative F-box protein At3g17490 from Arabidopsis thaliana (Mouse-ear cress).